The primary structure comprises 73 residues: Large ribosomal subunit protein bL31 (73 aa).

The protein belongs to the bacterial ribosomal protein bL31 family. Type A subfamily. As to quaternary structure, part of the 50S ribosomal subunit.

Its function is as follows. Binds the 23S rRNA. The sequence is that of Large ribosomal subunit protein bL31 from Mesorhizobium japonicum (strain LMG 29417 / CECT 9101 / MAFF 303099) (Mesorhizobium loti (strain MAFF 303099)).